Here is a 236-residue protein sequence, read N- to C-terminus: Phosphoribosylaminoimidazole-succinocarboxamide synthase (236 aa).

Belongs to the SAICAR synthetase family.

It catalyses the reaction 5-amino-1-(5-phospho-D-ribosyl)imidazole-4-carboxylate + L-aspartate + ATP = (2S)-2-[5-amino-1-(5-phospho-beta-D-ribosyl)imidazole-4-carboxamido]succinate + ADP + phosphate + 2 H(+). It participates in purine metabolism; IMP biosynthesis via de novo pathway; 5-amino-1-(5-phospho-D-ribosyl)imidazole-4-carboxamide from 5-amino-1-(5-phospho-D-ribosyl)imidazole-4-carboxylate: step 1/2. The polypeptide is Phosphoribosylaminoimidazole-succinocarboxamide synthase (Chlorobium phaeobacteroides (strain BS1)).